Consider the following 350-residue polypeptide: Putative ATP-binding protein BRA0745/BS1330_II0738 (350 aa).

In terms of domain architecture, ABC transporter spans V4 to I234. G36–S43 serves as a coordination point for ATP.

The protein belongs to the ABC transporter superfamily. The complex is composed of two ATP-binding proteins (BRA0745), two transmembrane proteins (BRA0749) and a solute-binding protein (BRA0748).

The protein resides in the cell inner membrane. Functionally, probably part of an ABC transporter complex. Probably responsible for energy coupling to the transport system. The sequence is that of Putative ATP-binding protein BRA0745/BS1330_II0738 from Brucella suis biovar 1 (strain 1330).